The primary structure comprises 486 residues: MTIEHTQDLAQIRAMVPEMRRVKSIHFIGIGGAGMSGIAEVLLNEGYQITGSDIAQNPVTERLVSKGATVYVGHQASNVADASVVVVSTAINEENPEIIAAREARTPIVRRAEMLAELMRFRHGIAVAGTHGKTTTTALVTQIYSEAGLDPTFVNGGLVKSAGTNARLGSSRILIAEADESDASFLHLQPMVSIVTNIEADHMDTYGGDFETLKQTFIDFLHNLPFYGQAVMCVDDPVVRELIPQVSRQVITYGFSEDADIRIENYVQEGQQGKFTVVREGKANLDITLNIPGRHNALNASAAIAVATEDDISDEAILKAMAGTEGTGRRFDHLGEYETGKGVAMLVDDYGHHPTEVDVTIQAARSGWTDKRLVMIFQPHRYSRTRDLYDDFANVLEQVDVLILLDVYSAGEKPIAGADGRSLSRTIRGRGKIDPIFVADINALPSALANVIQGGDLVLTQGAGDVGRVAKQLESLQLDINKMQNA.

129-135 is a binding site for ATP; sequence GTHGKTT.

It belongs to the MurCDEF family.

It is found in the cytoplasm. It carries out the reaction UDP-N-acetyl-alpha-D-muramate + L-alanine + ATP = UDP-N-acetyl-alpha-D-muramoyl-L-alanine + ADP + phosphate + H(+). The protein operates within cell wall biogenesis; peptidoglycan biosynthesis. In terms of biological role, cell wall formation. The chain is UDP-N-acetylmuramate--L-alanine ligase from Vibrio atlanticus (strain LGP32) (Vibrio splendidus (strain Mel32)).